A 106-amino-acid chain; its full sequence is Toxin-like structure LSTX-D3 (106 aa).

Positions 1–20 (MMKVLVVVALLVTLISYSSS) are cleaved as a signal peptide. Residues 21–41 (EGIDDLEADELLSLMANEQTR) constitute a propeptide that is removed on maturation. Disulfide bonds link Cys45/Cys60, Cys52/Cys69, Cys59/Cys85, and Cys71/Cys83.

This sequence belongs to the neurotoxin 19 (CSTX) family. 02 (D7) subfamily. As to expression, expressed by the venom gland.

Its subcellular location is the secreted. The polypeptide is Toxin-like structure LSTX-D3 (Lycosa singoriensis (Wolf spider)).